Consider the following 420-residue polypeptide: Pre-mRNA-splicing factor RBM22 (420 aa).

Ala-2 is subject to N-acetylalanine. Phosphoserine is present on residues Ser-4 and Ser-102. Glycyl lysine isopeptide (Lys-Gly) (interchain with G-Cter in SUMO2) cross-links involve residues Lys-139 and Lys-149. The C3H1-type zinc finger occupies 159–186 (RNRPHICSFWVKGECKRGEECPYRHEKP). Position 212 is an N6-acetyllysine (Lys-212). In terms of domain architecture, RRM spans 232–305 (TTLYVGGLGD…RRLNVKWGRS (74 aa)). Residue Lys-290 forms a Glycyl lysine isopeptide (Lys-Gly) (interchain with G-Cter in SUMO2) linkage. Disordered regions lie at residues 303 to 343 (GRSQ…AAEE) and 372 to 420 (APPP…HSSP). Positions 309–318 (RGKEKEKDGT) are enriched in basic and acidic residues.

It belongs to the SLT11 family. As to quaternary structure, component of the pre-catalytic and catalytic spliceosome complexes. Component of the postcatalytic spliceosome P complex. Interacts with PDCD6; the interaction induces translocation of PDCD6 in the cytoplasm. Interacts with PPIL1.

It localises to the nucleus. It is found in the cytoplasm. In terms of biological role, required for pre-mRNA splicing as component of the activated spliceosome. Involved in the first step of pre-mRNA splicing. Binds directly to the internal stem-loop (ISL) domain of the U6 snRNA and to the pre-mRNA intron near the 5' splice site during the activation and catalytic phases of the spliceosome cycle. Involved in both translocations of the nuclear SLU7 to the cytoplasm and the cytosolic calcium-binding protein PDCD6 to the nucleus upon cellular stress responses. The protein is Pre-mRNA-splicing factor RBM22 (RBM22) of Homo sapiens (Human).